We begin with the raw amino-acid sequence, 253 residues long: Ribosomal RNA small subunit methyltransferase G (253 aa).

S-adenosyl-L-methionine contacts are provided by residues G84, F89, 135 to 136 (AE), and R154. The segment at 228–253 (TPAKYPRREGVPTHQPLFWKAKEQSR) is disordered.

Belongs to the methyltransferase superfamily. RNA methyltransferase RsmG family.

The protein localises to the cytoplasm. In terms of biological role, specifically methylates the N7 position of a guanine in 16S rRNA. The sequence is that of Ribosomal RNA small subunit methyltransferase G from Deinococcus radiodurans (strain ATCC 13939 / DSM 20539 / JCM 16871 / CCUG 27074 / LMG 4051 / NBRC 15346 / NCIMB 9279 / VKM B-1422 / R1).